Here is a 148-residue protein sequence, read N- to C-terminus: D-aminoacyl-tRNA deacylase (148 aa).

The Gly-cisPro motif, important for rejection of L-amino acids motif lies at 137–138 (GP).

This sequence belongs to the DTD family. Homodimer.

Its subcellular location is the cytoplasm. The enzyme catalyses glycyl-tRNA(Ala) + H2O = tRNA(Ala) + glycine + H(+). It catalyses the reaction a D-aminoacyl-tRNA + H2O = a tRNA + a D-alpha-amino acid + H(+). In terms of biological role, an aminoacyl-tRNA editing enzyme that deacylates mischarged D-aminoacyl-tRNAs. Also deacylates mischarged glycyl-tRNA(Ala), protecting cells against glycine mischarging by AlaRS. Acts via tRNA-based rather than protein-based catalysis; rejects L-amino acids rather than detecting D-amino acids in the active site. By recycling D-aminoacyl-tRNA to D-amino acids and free tRNA molecules, this enzyme counteracts the toxicity associated with the formation of D-aminoacyl-tRNA entities in vivo and helps enforce protein L-homochirality. The polypeptide is D-aminoacyl-tRNA deacylase (Finegoldia magna (strain ATCC 29328 / DSM 20472 / WAL 2508) (Peptostreptococcus magnus)).